The primary structure comprises 419 residues: Pygopus homolog 1 (419 aa).

Disordered regions lie at residues 1–64 (MPAE…PNSD) and 175–338 (HFRQ…SSSD). Gly residues predominate over residues 18–30 (GDSGLDGLGGPGV). The Nuclear localization signal motif lies at 35-41 (PDKKKRK). Polar residues-rich tracts occupy residues 175–221 (HFRQ…SNHS) and 240–255 (DFTQ…NSSA). The segment covering 276–286 (VNRNNAVNQEN) has biased composition (low complexity). Over residues 287 to 307 (SRSSSTEATNNNPANGTQNKP) the composition is skewed to polar residues. The PHD-type zinc-finger motif lies at 340–398 (VYPCGICTNEVNDDQDAILCEASCQKWFHRICTGMTETAYGLLTAEASAVWGCDTCMAD). Residues 341–388 (YPCGICTNEVNDDQDAILCEASCQKWFHRICTGMTETAYGLLTAEASA) are interaction with H3K4me2. Residues 373-391 (GMTETAYGLLTAEASAVWG) form an interaction with BCL9 region.

As to quaternary structure, interacts with BCL9 via The PHD-type zinc finger motiv, and thereby becomes part of the nuclear beta-catenin/TCF complex. Identified in a complex with BCL9L, CDC73, CTNNB1 and PYGO1. Interacts with histone H3 mono-, di- or tri-methylated at 'Lys4' (H3K4me1, H3K4me2, H3K4me3); the interaction is enhanced by the interaction with BCL9.

It localises to the nucleus. Functionally, involved in signal transduction through the Wnt pathway. This chain is Pygopus homolog 1 (PYGO1), found in Homo sapiens (Human).